We begin with the raw amino-acid sequence, 176 residues long: Ribosome rescue factor SmrB (176 aa).

One can recognise a Smr domain in the interval Leu-97–Ser-172.

The protein belongs to the SmrB family. In terms of assembly, associates with collided ribosomes, but not with correctly translating polysomes.

Functionally, acts as a ribosome collision sensor. Detects stalled/collided disomes (pairs of ribosomes where the leading ribosome is stalled and a second ribosome has collided with it) and endonucleolytically cleaves mRNA at the 5' boundary of the stalled ribosome. Stalled/collided disomes form a new interface (primarily via the 30S subunits) that binds SmrB. Cleaved mRNA becomes available for tmRNA ligation, leading to ribosomal subunit dissociation and rescue of stalled ribosomes. This Vibrio vulnificus (strain CMCP6) protein is Ribosome rescue factor SmrB.